A 285-amino-acid chain; its full sequence is Pantothenate synthetase (285 aa).

30-37 (MGYLHAGH) contacts ATP. His-37 acts as the Proton donor in catalysis. Gln-61 contacts (R)-pantoate. Beta-alanine is bound at residue Gln-61. ATP is bound at residue 147–150 (GQKD). Gln-153 provides a ligand contact to (R)-pantoate. Residues Val-176 and 184 to 187 (LSSR) contribute to the ATP site.

Belongs to the pantothenate synthetase family. Homodimer.

Its subcellular location is the cytoplasm. It carries out the reaction (R)-pantoate + beta-alanine + ATP = (R)-pantothenate + AMP + diphosphate + H(+). It functions in the pathway cofactor biosynthesis; (R)-pantothenate biosynthesis; (R)-pantothenate from (R)-pantoate and beta-alanine: step 1/1. Catalyzes the condensation of pantoate with beta-alanine in an ATP-dependent reaction via a pantoyl-adenylate intermediate. This Solidesulfovibrio magneticus (strain ATCC 700980 / DSM 13731 / RS-1) (Desulfovibrio magneticus) protein is Pantothenate synthetase.